Reading from the N-terminus, the 849-residue chain is DNA mismatch repair protein MutS (849 aa).

602–609 (GPNMSGKS) lines the ATP pocket.

The protein belongs to the DNA mismatch repair MutS family.

In terms of biological role, this protein is involved in the repair of mismatches in DNA. It is possible that it carries out the mismatch recognition step. This protein has a weak ATPase activity. This chain is DNA mismatch repair protein MutS, found in Streptococcus sanguinis (strain SK36).